The chain runs to 220 residues: Ribosomal RNA large subunit methyltransferase E (220 aa).

The S-adenosyl-L-methionine site is built by Gly60, Trp62, Asp92, Asp108, and Asp133. Lys173 serves as the catalytic Proton acceptor.

This sequence belongs to the class I-like SAM-binding methyltransferase superfamily. RNA methyltransferase RlmE family.

It localises to the cytoplasm. It carries out the reaction uridine(2552) in 23S rRNA + S-adenosyl-L-methionine = 2'-O-methyluridine(2552) in 23S rRNA + S-adenosyl-L-homocysteine + H(+). Its function is as follows. Specifically methylates the uridine in position 2552 of 23S rRNA at the 2'-O position of the ribose in the fully assembled 50S ribosomal subunit. The polypeptide is Ribosomal RNA large subunit methyltransferase E (Paraburkholderia phytofirmans (strain DSM 17436 / LMG 22146 / PsJN) (Burkholderia phytofirmans)).